A 246-amino-acid chain; its full sequence is Probable transcriptional regulatory protein CLK_2466 (246 aa).

It belongs to the TACO1 family.

Its subcellular location is the cytoplasm. This Clostridium botulinum (strain Loch Maree / Type A3) protein is Probable transcriptional regulatory protein CLK_2466.